The chain runs to 558 residues: Arginine--tRNA ligase (558 aa).

Positions 134–144 (ANPTGPMVLVQ) match the 'HIGH' region motif.

The protein belongs to the class-I aminoacyl-tRNA synthetase family. In terms of assembly, monomer.

The protein resides in the cytoplasm. The catalysed reaction is tRNA(Arg) + L-arginine + ATP = L-arginyl-tRNA(Arg) + AMP + diphosphate. The protein is Arginine--tRNA ligase of Symbiobacterium thermophilum (strain DSM 24528 / JCM 14929 / IAM 14863 / T).